The chain runs to 404 residues: L-cysteine:1D-myo-inositol 2-amino-2-deoxy-alpha-D-glucopyranoside ligase (404 aa).

The disordered stretch occupies residues 1–20; it reads MRTWPTPDVPPLPRTGAPAP. Residue Cys-45 coordinates Zn(2+). L-cysteinyl-5'-AMP is bound by residues 45 to 48, Thr-60, and 83 to 85; these read CGIT and NVT. Residues 47 to 57 carry the 'HIGH' region motif; it reads ITPYDATHLGH. Residues 185–190 carry the 'ERGGDP' region motif; sequence ERGGDP. The tract at residues 185–216 is disordered; the sequence is ERGGDPDRPGKKHPLDPALWRGEQPGEPSWDG. Basic and acidic residues predominate over residues 186–199; that stretch reads RGGDPDRPGKKHPL. Residue Trp-226 participates in L-cysteinyl-5'-AMP binding. Cys-230 serves as a coordination point for Zn(2+). Residue 248–250 coordinates L-cysteinyl-5'-AMP; that stretch reads GAD. His-255 provides a ligand contact to Zn(2+). L-cysteinyl-5'-AMP is bound at residue Leu-280. The 'KMSKS' region motif lies at 286–290; sequence KMSKS.

The protein belongs to the class-I aminoacyl-tRNA synthetase family. MshC subfamily. As to quaternary structure, monomer. It depends on Zn(2+) as a cofactor.

The enzyme catalyses 1D-myo-inositol 2-amino-2-deoxy-alpha-D-glucopyranoside + L-cysteine + ATP = 1D-myo-inositol 2-(L-cysteinylamino)-2-deoxy-alpha-D-glucopyranoside + AMP + diphosphate + H(+). Functionally, catalyzes the ATP-dependent condensation of GlcN-Ins and L-cysteine to form L-Cys-GlcN-Ins. The protein is L-cysteine:1D-myo-inositol 2-amino-2-deoxy-alpha-D-glucopyranoside ligase of Xylanimonas cellulosilytica (strain DSM 15894 / JCM 12276 / CECT 5975 / KCTC 9989 / LMG 20990 / NBRC 107835 / XIL07).